Reading from the N-terminus, the 157-residue chain is Transcription elongation factor GreA (157 aa).

The protein belongs to the GreA/GreB family.

Functionally, necessary for efficient RNA polymerase transcription elongation past template-encoded arresting sites. The arresting sites in DNA have the property of trapping a certain fraction of elongating RNA polymerases that pass through, resulting in locked ternary complexes. Cleavage of the nascent transcript by cleavage factors such as GreA or GreB allows the resumption of elongation from the new 3'terminus. GreA releases sequences of 2 to 3 nucleotides. This chain is Transcription elongation factor GreA, found in Maricaulis maris (strain MCS10) (Caulobacter maris).